The following is a 1057-amino-acid chain: Desmoglein-1-alpha (1057 aa).

The N-terminal stretch at 1–23 (MDWHSFRIAALLLTSLVVLEVNS) is a signal peptide. The propeptide occupies 24-49 (EFQIQVRDHNAKNGTIKWHSIRRQKR). Cadherin domains lie at 50–157 (EWIK…PPVF), 158–269 (SMTT…IPYL), 270–389 (EQSS…RPGS), and 386–493 (RPGS…TGSE). Residues 50-564 (EWIKFAAACR…LYGDNVHFGP (515 aa)) are Extracellular-facing. N-linked (GlcNAc...) asparagine glycosylation is found at Asn110 and Asn180. A disordered region spans residues 490–552 (TGSESGGSSS…FQGDPDETLE (63 aa)). Residues 510-525 (NGYQGTSSTENPQRVT) show a composition bias toward polar residues. Residues 565 to 585 (AGIGLLIMGFLVLGLVPFLLI) form a helical membrane-spanning segment. At 586–1057 (CCDCGGAPGG…TKYNTVQYSK (472 aa)) the chain is on the cytoplasmic side. Desmoglein repeat repeat units follow at residues 832–858 (AYHS…TVRE), 859–888 (SYTT…ERVV), 889–918 (GPIS…ERVI), 919–946 (APGS…ERVI), and 947–975 (QPTS…ERVV).

Binds to JUP/plakoglobin. Interacts with PKP2. Interacts with DSC3; there is evidence to suggest that the interaction promotes cell-cell adhesion of keratinocytes. In terms of tissue distribution, expressed in testis.

It is found in the cell membrane. The protein resides in the cell junction. It localises to the desmosome. Its subcellular location is the cytoplasm. The protein localises to the nucleus. Its function is as follows. Component of intercellular desmosome junctions. Involved in the interaction of plaque proteins and intermediate filaments mediating cell-cell adhesion. This Mus musculus (Mouse) protein is Desmoglein-1-alpha (Dsg1a).